Reading from the N-terminus, the 53-residue chain is Mannose/glucose-specific lectin alpha 1 chain (53 aa).

Belongs to the leguminous lectin family. In terms of assembly, tetramer of two alpha and two beta chains.

This Lathyrus ochrus (Cyprus-vetch) protein is Mannose/glucose-specific lectin alpha 1 chain.